The chain runs to 216 residues: Alanyl-tRNA editing protein AlaX-M (216 aa).

The Zn(2+) site is built by His-99, His-103, and Cys-182.

It belongs to the class-II aminoacyl-tRNA synthetase family. Editing domain AlaX-M subfamily. Monomer. It depends on Zn(2+) as a cofactor.

The protein localises to the cytoplasm. Its function is as follows. Functions in trans to edit the amino acid moiety from mischarged charged Gly-tRNA(Ala) and Ser-tRNA(Ala). In Pyrococcus horikoshii (strain ATCC 700860 / DSM 12428 / JCM 9974 / NBRC 100139 / OT-3), this protein is Alanyl-tRNA editing protein AlaX-M (alaXM).